The sequence spans 516 residues: uncharacterized protein (516 aa).

PFTB repeat units follow at residues 45–86 (RQDA…QRAD) and 401–443 (DERA…DGSE).

This is an uncharacterized protein from Sinorhizobium fredii (strain NBRC 101917 / NGR234).